A 273-amino-acid polypeptide reads, in one-letter code: Ribosomal RNA small subunit methyltransferase A (273 aa).

S-adenosyl-L-methionine-binding residues include N18, L20, G45, E66, D91, and N113.

The protein belongs to the class I-like SAM-binding methyltransferase superfamily. rRNA adenine N(6)-methyltransferase family. RsmA subfamily.

The protein localises to the cytoplasm. It carries out the reaction adenosine(1518)/adenosine(1519) in 16S rRNA + 4 S-adenosyl-L-methionine = N(6)-dimethyladenosine(1518)/N(6)-dimethyladenosine(1519) in 16S rRNA + 4 S-adenosyl-L-homocysteine + 4 H(+). Specifically dimethylates two adjacent adenosines (A1518 and A1519) in the loop of a conserved hairpin near the 3'-end of 16S rRNA in the 30S particle. May play a critical role in biogenesis of 30S subunits. This Citrobacter koseri (strain ATCC BAA-895 / CDC 4225-83 / SGSC4696) protein is Ribosomal RNA small subunit methyltransferase A.